Consider the following 98-residue polypeptide: DNA-binding protein Fis (98 aa).

Residues 74–93 constitute a DNA-binding region (H-T-H motif); that stretch reads QTRAATMMGINRGTLRKKLK.

Belongs to the transcriptional regulatory Fis family. In terms of assembly, homodimer.

In terms of biological role, activates ribosomal RNA transcription. Plays a direct role in upstream activation of rRNA promoters. The protein is DNA-binding protein Fis of Vibrio atlanticus (strain LGP32) (Vibrio splendidus (strain Mel32)).